We begin with the raw amino-acid sequence, 353 residues long: MPKKIRVLVIDDSALVRQILSKGLALDPSIEVVGTAGDPYIARDKIVKLQPDVLTLDVEMPRMDGVDFLRRLMPQYPLPVVMVSSLTQKGKQITLDSLDAGAVDFVSKPTSDIARGLKAMLSELCAKVKLASTANVSHWKAARTVVPARLKTLEKRALAESTDKVIAIGASTGGTEAIRKIIAQFPATMPGVVIVQHMPAGFTRLFAERLNQLCAMEVKEAATGDRIMPGRVLIGPGGFHMKVVRSGGFYQVRCEPGPPVKGHCPSVDVMMHSVAKHVGGNAIGVMLTGMGSDGAEGMRAMREAGARNLAQDEASCVVFGMPKVAYEMGGAHSLVSLDSMAPRIVDLLSERRI.

In terms of domain architecture, Response regulatory spans 6 to 123 (RVLVIDDSAL…ARGLKAMLSE (118 aa)). D57 carries the 4-aspartylphosphate modification. In terms of domain architecture, CheB-type methylesterase spans 159 to 351 (AESTDKVIAI…PRIVDLLSER (193 aa)). Catalysis depends on residues S171, H197, and D293.

This sequence belongs to the CheB family. Post-translationally, phosphorylated by CheA. Phosphorylation of the N-terminal regulatory domain activates the methylesterase activity.

It is found in the cytoplasm. The catalysed reaction is [protein]-L-glutamate 5-O-methyl ester + H2O = L-glutamyl-[protein] + methanol + H(+). The enzyme catalyses L-glutaminyl-[protein] + H2O = L-glutamyl-[protein] + NH4(+). Its function is as follows. Involved in chemotaxis. Part of a chemotaxis signal transduction system that modulates chemotaxis in response to various stimuli. Catalyzes the demethylation of specific methylglutamate residues introduced into the chemoreceptors (methyl-accepting chemotaxis proteins or MCP) by CheR. Also mediates the irreversible deamidation of specific glutamine residues to glutamic acid. This chain is Protein-glutamate methylesterase/protein-glutamine glutaminase, found in Syntrophotalea carbinolica (strain DSM 2380 / NBRC 103641 / GraBd1) (Pelobacter carbinolicus).